The sequence spans 993 residues: DNA double-strand break repair Rad50 ATPase (993 aa).

Residues Arg-12, 32-38, and Gln-133 contribute to the ATP site; that span reads NGSGKSS. Coiled coils occupy residues 192–222 and 402–493; these read LENLEKLKNEVSESEILKEEILKKYENLEKL and EELK…LEKT. Residues 452 to 556 enclose the Zinc-hook domain; the sequence is ENELKEKYED…KLNEIDSFKL (105 aa). Zn(2+) contacts are provided by Cys-497 and Cys-500. Coiled-coil stretches lie at residues 570–612, 646–677, and 702–731; these read KVEE…LEND, DSSKIENEKKSLENLKDELKNTIYNLEREINL, and ETEKSDFENKLSECKENYEKYMESLAVLKN.

It belongs to the SMC family. RAD50 subfamily. In terms of assembly, homodimer. Forms a heterotetramer composed of two Mre11 subunits and two Rad50 subunits. Zn(2+) is required as a cofactor.

Its function is as follows. Part of the Rad50/Mre11 complex, which is involved in the early steps of DNA double-strand break (DSB) repair. The complex may facilitate opening of the processed DNA ends to aid in the recruitment of HerA and NurA. Rad50 controls the balance between DNA end bridging and DNA resection via ATP-dependent structural rearrangements of the Rad50/Mre11 complex. The polypeptide is DNA double-strand break repair Rad50 ATPase (Methanococcus maripaludis (strain DSM 14266 / JCM 13030 / NBRC 101832 / S2 / LL)).